The sequence spans 504 residues: Cystathionine beta-synthase (504 aa).

Residues Cys-12 and His-23 each contribute to the heme site. Position 78 is an N6-(pyridoxal phosphate)lysine (Lys-78). Residues Asn-108, 215-219 (GTGGT), and Ser-307 contribute to the pyridoxal 5'-phosphate site. CBS domains follow at residues 375–434 (LSFD…IVKC) and 442–498 (MVKQ…NGTS).

The protein belongs to the cysteine synthase/cystathionine beta-synthase family. Homodimer. Requires pyridoxal 5'-phosphate as cofactor.

It catalyses the reaction L-homocysteine + L-serine = L,L-cystathionine + H2O. It functions in the pathway amino-acid biosynthesis; L-cysteine biosynthesis; L-cysteine from L-homocysteine and L-serine: step 1/2. Its activity is regulated as follows. Has no response to S-adenosyl-methionine/AdoMet, unlike mammalian orthologs. Binds non-covalently to a heme group that may control the redox sensitivity of the enzyme. Its function is as follows. Hydro-lyase catalyzing the first step of the transsulfuration pathway, where the hydroxyl group of L-serine is displaced by L-homocysteine in a beta-replacement reaction to form L-cystathionine, the precursor of L-cysteine. The protein is Cystathionine beta-synthase of Apis mellifera (Honeybee).